A 443-amino-acid polypeptide reads, in one-letter code: Histidinol dehydrogenase (443 aa).

NAD(+) is bound by residues Tyr127, Gln185, and Asn208. Residues Ser234, Gln256, and His259 each coordinate substrate. Zn(2+)-binding residues include Gln256 and His259. Active-site proton acceptor residues include Glu323 and His324. Substrate-binding residues include His324, Asp357, Glu411, and His416. Asp357 serves as a coordination point for Zn(2+). His416 lines the Zn(2+) pocket.

The protein belongs to the histidinol dehydrogenase family. Zn(2+) serves as cofactor.

It catalyses the reaction L-histidinol + 2 NAD(+) + H2O = L-histidine + 2 NADH + 3 H(+). It functions in the pathway amino-acid biosynthesis; L-histidine biosynthesis; L-histidine from 5-phospho-alpha-D-ribose 1-diphosphate: step 9/9. Functionally, catalyzes the sequential NAD-dependent oxidations of L-histidinol to L-histidinaldehyde and then to L-histidine. The chain is Histidinol dehydrogenase from Photobacterium profundum (strain SS9).